A 444-amino-acid chain; its full sequence is Tubulin beta-8 chain (444 aa).

The MREI motif signature appears at 1–4 (MREI). Gln-11, Glu-69, Ser-138, Gly-142, Thr-143, and Gly-144 together coordinate GTP. Glu-69 contributes to the Mg(2+) binding site. The residue at position 172 (Ser-172) is a Phosphoserine; by CDK1. GTP is bound by residues Asn-204 and Asn-226. The disordered stretch occupies residues 423–444 (QQYQDATAEEEEDEEYAEEEVA). Residues 429-444 (TAEEEEDEEYAEEEVA) show a composition bias toward acidic residues. Glu-436 is modified (5-glutamyl polyglutamate).

Belongs to the tubulin family. As to quaternary structure, dimer of alpha and beta chains. A typical microtubule is a hollow water-filled tube with an outer diameter of 25 nm and an inner diameter of 15 nM. Alpha-beta heterodimers associate head-to-tail to form protofilaments running lengthwise along the microtubule wall with the beta-tubulin subunit facing the microtubule plus end conferring a structural polarity. Microtubules usually have 13 protofilaments but different protofilament numbers can be found in some organisms and specialized cells. Mg(2+) serves as cofactor. Some glutamate residues at the C-terminus are polyglutamylated, resulting in polyglutamate chains on the gamma-carboxyl group. Polyglutamylation plays a key role in microtubule severing by spastin (SPAST). SPAST preferentially recognizes and acts on microtubules decorated with short polyglutamate tails: severing activity by SPAST increases as the number of glutamates per tubulin rises from one to eight, but decreases beyond this glutamylation threshold. Glutamylation is also involved in cilia motility. Post-translationally, some glutamate residues at the C-terminus are monoglycylated but not polyglycylated due to the absence of functional TTLL10 in human. Monoglycylation is mainly limited to tubulin incorporated into cilia and flagella axonemes, which is required for their stability and maintenance. Flagella glycylation controls sperm motility. Both polyglutamylation and monoglycylation can coexist on the same protein on adjacent residues, and lowering glycylation levels increases polyglutamylation, and reciprocally. In terms of processing, phosphorylated on Ser-172 by CDK1 during the cell cycle, from metaphase to telophase, but not in interphase. This phosphorylation inhibits tubulin incorporation into microtubules. Expressed at a high level in oocytes, at different stages of development.

The protein localises to the cytoplasm. The protein resides in the cytoskeleton. It localises to the spindle. Its function is as follows. Tubulin is the major constituent of microtubules, a cylinder consisting of laterally associated linear protofilaments composed of alpha- and beta-tubulin heterodimers. Microtubules grow by the addition of GTP-tubulin dimers to the microtubule end, where a stabilizing cap forms. Below the cap, tubulin dimers are in GDP-bound state, owing to GTPase activity of alpha-tubulin. TUBB8 has a key role in meiotic spindle assembly and oocyte maturation. The chain is Tubulin beta-8 chain from Homo sapiens (Human).